The following is a 702-amino-acid chain: Ribosomal RNA large subunit methyltransferase K/L (702 aa).

The region spanning 43–154 is the THUMP domain; the sequence is LIYQSLMWSR…KETASIALDL (112 aa).

The protein belongs to the methyltransferase superfamily. RlmKL family.

It is found in the cytoplasm. It catalyses the reaction guanosine(2445) in 23S rRNA + S-adenosyl-L-methionine = N(2)-methylguanosine(2445) in 23S rRNA + S-adenosyl-L-homocysteine + H(+). The catalysed reaction is guanosine(2069) in 23S rRNA + S-adenosyl-L-methionine = N(2)-methylguanosine(2069) in 23S rRNA + S-adenosyl-L-homocysteine + H(+). In terms of biological role, specifically methylates the guanine in position 2445 (m2G2445) and the guanine in position 2069 (m7G2069) of 23S rRNA. The polypeptide is Ribosomal RNA large subunit methyltransferase K/L (Salmonella paratyphi B (strain ATCC BAA-1250 / SPB7)).